A 329-amino-acid chain; its full sequence is NADH-quinone oxidoreductase subunit H 1 (329 aa).

8 helical membrane passes run 12–32 (LAKIALIFFVVLTLAAYLVFA), 78–98 (WLFYLAPAMAAIPAILTFAVI), 120–140 (VGLLFFLALSSIAVYGVALGG), 159–179 (LISYELSMGLSLVPTVMLAGS), 191–211 (GIWFIVYQPLAFVIFLISIAA), 242–262 (LFFVGEYINIIVLGGLATTFF), 270–290 (WLPPFVWFSAKTLAFAFFFIW), and 308–328 (WKVLTPLALVNILVTGWILML).

It belongs to the complex I subunit 1 family. In terms of assembly, NDH-1 is composed of 14 different subunits. Subunits NuoA, H, J, K, L, M, N constitute the membrane sector of the complex.

The protein resides in the cell inner membrane. It carries out the reaction a quinone + NADH + 5 H(+)(in) = a quinol + NAD(+) + 4 H(+)(out). In terms of biological role, NDH-1 shuttles electrons from NADH, via FMN and iron-sulfur (Fe-S) centers, to quinones in the respiratory chain. The immediate electron acceptor for the enzyme in this species is believed to be ubiquinone. Couples the redox reaction to proton translocation (for every two electrons transferred, four hydrogen ions are translocated across the cytoplasmic membrane), and thus conserves the redox energy in a proton gradient. This subunit may bind ubiquinone. In Geobacter metallireducens (strain ATCC 53774 / DSM 7210 / GS-15), this protein is NADH-quinone oxidoreductase subunit H 1.